Consider the following 335-residue polypeptide: Phosphate acyltransferase (335 aa).

This sequence belongs to the PlsX family. As to quaternary structure, homodimer. Probably interacts with PlsY.

It is found in the cytoplasm. It catalyses the reaction a fatty acyl-[ACP] + phosphate = an acyl phosphate + holo-[ACP]. It participates in lipid metabolism; phospholipid metabolism. Functionally, catalyzes the reversible formation of acyl-phosphate (acyl-PO(4)) from acyl-[acyl-carrier-protein] (acyl-ACP). This enzyme utilizes acyl-ACP as fatty acyl donor, but not acyl-CoA. This is Phosphate acyltransferase from Streptococcus equi subsp. equi (strain 4047).